Consider the following 299-residue polypeptide: Coenzyme PQQ synthesis protein B (299 aa).

It belongs to the PqqB family.

The protein operates within cofactor biosynthesis; pyrroloquinoline quinone biosynthesis. In terms of biological role, may be involved in the transport of PQQ or its precursor to the periplasm. The chain is Coenzyme PQQ synthesis protein B from Xanthomonas campestris pv. campestris (strain 8004).